Here is a 165-residue protein sequence, read N- to C-terminus: Bacterial non-heme ferritin (165 aa).

In terms of domain architecture, Ferritin-like diiron spans 1-145; the sequence is MLKPEMIEKL…SIIDKLSLAG (145 aa). Residues Glu-17, Glu-49, Glu-50, His-53, Glu-94, Glu-126, Gln-127, and Glu-130 each coordinate Fe cation.

It belongs to the ferritin family. Prokaryotic subfamily. In terms of assembly, homooligomer of 24 subunits that assemble into a spherical protein shell (12 +/- 1 nM diameter) that can sequester at least 2000 iron atoms.

The protein localises to the cytoplasm. It catalyses the reaction 4 Fe(2+) + O2 + 6 H2O = 4 iron(III) oxide-hydroxide + 12 H(+). Functionally, iron-storage protein. The sequence is that of Bacterial non-heme ferritin (ftnA) from Escherichia coli O157:H7.